A 393-amino-acid polypeptide reads, in one-letter code: PGA synthase CapB (393 aa).

Mn(2+) serves as cofactor.

Catalyzes the biosynthesis of PGA (gamma-polyglutamic acid) from L-glutamate. Both the 44-kDa and the 33-kDa forms are required for PGA synthesis. The polypeptide is PGA synthase CapB (capB) (Bacillus subtilis (strain 168)).